Reading from the N-terminus, the 199-residue chain is MRLTLQHINRLKVLLHLAGFLPLLWLILSVDQGWFSADPAKDIQHFTGRMALKLLLATLLVTPLARYGKQPLLIRCRRLLGLWCFFWATLHLVSYALLELGLDHLALLGKELISRPYLTLGIISWLILLALAVTSPQIMMRKLGSQWQKLHNFVYLVAILTPIHYLWSVKTLSPQPILYALAALILLLLRYKKFRQWWR.

5 helical membrane-spanning segments follow: residues 13–33 (VLLH…VDQG), 79–99 (LLGL…ALLE), 120–140 (LGII…QIMM), 147–167 (WQKL…HYLW), and 169–189 (VKTL…LLLL).

Belongs to the MsrQ family. In terms of assembly, heterodimer of a catalytic subunit (MsrP) and a heme-binding subunit (MsrQ). FMN serves as cofactor. Heme b is required as a cofactor.

The protein resides in the cell inner membrane. Part of the MsrPQ system that repairs oxidized periplasmic proteins containing methionine sulfoxide residues (Met-O), using respiratory chain electrons. Thus protects these proteins from oxidative-stress damage caused by reactive species of oxygen and chlorine generated by the host defense mechanisms. MsrPQ is essential for the maintenance of envelope integrity under bleach stress, rescuing a wide series of structurally unrelated periplasmic proteins from methionine oxidation. MsrQ provides electrons for reduction to the reductase catalytic subunit MsrP, using the quinone pool of the respiratory chain. The protein is Protein-methionine-sulfoxide reductase heme-binding subunit MsrQ of Pectobacterium atrosepticum (strain SCRI 1043 / ATCC BAA-672) (Erwinia carotovora subsp. atroseptica).